The following is a 235-amino-acid chain: Ribitol-5-phosphate cytidylyltransferase (235 aa).

Residues 7–10 (LAGG), 82–88 (GADRNTS), and Ser113 contribute to the CTP site.

This sequence belongs to the IspD/TarI cytidylyltransferase family. TarI subfamily.

It catalyses the reaction D-ribitol 5-phosphate + CTP + H(+) = CDP-L-ribitol + diphosphate. Its pathway is cell wall biogenesis; poly(ribitol phosphate) teichoic acid biosynthesis. Catalyzes the transfer of the cytidylyl group of CTP to D-ribitol 5-phosphate. The chain is Ribitol-5-phosphate cytidylyltransferase from Streptococcus pneumoniae (strain ATCC 700669 / Spain 23F-1).